We begin with the raw amino-acid sequence, 334 residues long: uncharacterized protein (334 aa).

Belongs to the PAPS reductase family.

This is an uncharacterized protein from Escherichia phage 186 (Bacteriophage 186).